The following is a 572-amino-acid chain: Light-independent protochlorophyllide reductase subunit N (572 aa).

Residues cysteine 106, cysteine 131, and cysteine 191 each contribute to the [4Fe-4S] cluster site. The disordered stretch occupies residues serine 249–asparagine 268.

Belongs to the BchN/ChlN family. As to quaternary structure, protochlorophyllide reductase is composed of three subunits; ChlL, ChlN and ChlB. Forms a heterotetramer of two ChlB and two ChlN subunits. It depends on [4Fe-4S] cluster as a cofactor.

Its subcellular location is the plastid. The protein localises to the chloroplast. It carries out the reaction chlorophyllide a + oxidized 2[4Fe-4S]-[ferredoxin] + 2 ADP + 2 phosphate = protochlorophyllide a + reduced 2[4Fe-4S]-[ferredoxin] + 2 ATP + 2 H2O. It participates in porphyrin-containing compound metabolism; chlorophyll biosynthesis (light-independent). Its function is as follows. Component of the dark-operative protochlorophyllide reductase (DPOR) that uses Mg-ATP and reduced ferredoxin to reduce ring D of protochlorophyllide (Pchlide) to form chlorophyllide a (Chlide). This reaction is light-independent. The NB-protein (ChlN-ChlB) is the catalytic component of the complex. This Oltmannsiellopsis viridis (Marine flagellate) protein is Light-independent protochlorophyllide reductase subunit N.